A 223-amino-acid polypeptide reads, in one-letter code: Putative HTLV-1-related endogenous sequence (223 aa).

The span at 1-19 shows a compositional bias: low complexity; that stretch reads MRCAHAPAPRTRYPTRAPS. Positions 1–184 are disordered; sequence MRCAHAPAPR…ARAHGEAGAG (184 aa). The segment covering 115–126 has biased composition (basic and acidic residues); sequence GDRRREGPDRSP. Over residues 133–157 the composition is skewed to low complexity; that stretch reads PAAAAQPDSSSAQAPGPSTLRPAAT.

In Homo sapiens (Human), this protein is Putative HTLV-1-related endogenous sequence (HRES1).